The sequence spans 700 residues: Calpain-2 catalytic subunit (700 aa).

A2 bears the N-acetylalanine mark. Positions 2-19 are cleaved as a propeptide — anchors to the small subunit; that stretch reads AGIAAKLAKDREAAEGLG. A Calpain catalytic domain is found at 45 to 344; sequence LFQDPSFPAI…YSRLEICNLT (300 aa). 3 residues coordinate Ca(2+): I89, G91, and D96. Residue C105 is part of the active site. E175, Q229, and K230 together coordinate Ca(2+). Active-site residues include H262 and N286. Ca(2+) contacts are provided by E292, D299, and E323. Positions 345–514 are domain III; it reads PDTLTSDTYK…KKADYQAVDD (170 aa). The tract at residues 515–529 is linker; that stretch reads EIEANLEEFDISEDD. A domain IV region spans residues 530-700; that stretch reads IDDGFRRLFA…LISWLCFSVL (171 aa). 16 residues coordinate Ca(2+): A542, D545, E547, E552, D585, D587, S589, K591, E596, D615, D617, S619, T621, E626, D658, and N661. 2 consecutive EF-hand domains span residues 572 to 605 and 602 to 637; these read FSIE…TKIQ and TKIQ…AGFK. Residues 667–700 enclose the EF-hand 3 domain; the sequence is VRLETLFKIFKQLDPENTGTIELDLISWLCFSVL.

It belongs to the peptidase C2 family. Forms a heterodimer with a small (regulatory) subunit (CAPNS1). Interacts with CPEB3; this leads to cleavage of CPEB3. Interacts with PIDD1 alternative open reading frame protein altPIDD1. It depends on Ca(2+) as a cofactor. As to expression, ubiquitous.

It localises to the cytoplasm. It is found in the cell membrane. The enzyme catalyses Broad endopeptidase specificity.. With respect to regulation, activated by 200-1000 micromolar concentrations of calcium and inhibited by calpastatin. Calcium-regulated non-lysosomal thiol-protease which catalyzes limited proteolysis of substrates involved in cytoskeletal remodeling and signal transduction. Proteolytically cleaves MYOC at 'Arg-226'. Proteolytically cleaves CPEB3 following neuronal stimulation which abolishes CPEB3 translational repressor activity, leading to translation of CPEB3 target mRNAs. This is Calpain-2 catalytic subunit (CAPN2) from Homo sapiens (Human).